The primary structure comprises 93 residues: Small ribosomal subunit protein uS19 (93 aa).

The protein belongs to the universal ribosomal protein uS19 family.

Functionally, protein S19 forms a complex with S13 that binds strongly to the 16S ribosomal RNA. The protein is Small ribosomal subunit protein uS19 of Campylobacter hominis (strain ATCC BAA-381 / DSM 21671 / CCUG 45161 / LMG 19568 / NCTC 13146 / CH001A).